A 263-amino-acid chain; its full sequence is Endonuclease 8 (263 aa).

Pro-2 acts as the Schiff-base intermediate with DNA in catalysis. The active-site Proton donor is Glu-3. The active-site Proton donor; for beta-elimination activity is the Lys-53. DNA is bound by residues Gln-70, Arg-125, and Asn-169. The FPG-type zinc finger occupies 229–263 (KVFHRDGEACERCGGIIEKTTLSSRPFYWCPHCQK). Catalysis depends on Arg-253, which acts as the Proton donor; for delta-elimination activity.

The protein belongs to the FPG family. It depends on Zn(2+) as a cofactor.

It catalyses the reaction 2'-deoxyribonucleotide-(2'-deoxyribose 5'-phosphate)-2'-deoxyribonucleotide-DNA = a 3'-end 2'-deoxyribonucleotide-(2,3-dehydro-2,3-deoxyribose 5'-phosphate)-DNA + a 5'-end 5'-phospho-2'-deoxyribonucleoside-DNA + H(+). Functionally, involved in base excision repair of DNA damaged by oxidation or by mutagenic agents. Acts as a DNA glycosylase that recognizes and removes damaged bases. Has a preference for oxidized pyrimidines, such as thymine glycol, 5,6-dihydrouracil and 5,6-dihydrothymine. Has AP (apurinic/apyrimidinic) lyase activity and introduces nicks in the DNA strand. Cleaves the DNA backbone by beta-delta elimination to generate a single-strand break at the site of the removed base with both 3'- and 5'-phosphates. The chain is Endonuclease 8 from Salmonella paratyphi A (strain AKU_12601).